Consider the following 313-residue polypeptide: tRNA-cytidine(32) 2-sulfurtransferase (313 aa).

A PP-loop motif motif is present at residues 54–59 (SGGKDS). Cysteine 129, cysteine 132, and cysteine 220 together coordinate [4Fe-4S] cluster.

This sequence belongs to the TtcA family. Homodimer. Mg(2+) serves as cofactor. It depends on [4Fe-4S] cluster as a cofactor.

The protein localises to the cytoplasm. The catalysed reaction is cytidine(32) in tRNA + S-sulfanyl-L-cysteinyl-[cysteine desulfurase] + AH2 + ATP = 2-thiocytidine(32) in tRNA + L-cysteinyl-[cysteine desulfurase] + A + AMP + diphosphate + H(+). Its pathway is tRNA modification. Its function is as follows. Catalyzes the ATP-dependent 2-thiolation of cytidine in position 32 of tRNA, to form 2-thiocytidine (s(2)C32). The sulfur atoms are provided by the cysteine/cysteine desulfurase (IscS) system. This chain is tRNA-cytidine(32) 2-sulfurtransferase, found in Methylibium petroleiphilum (strain ATCC BAA-1232 / LMG 22953 / PM1).